The sequence spans 309 residues: Ankyrin repeat protein VACWR203 (309 aa).

5 ANK repeats span residues 13–44 (SVFK…SLTI), 110–142 (KYGT…DINA), 160–189 (FVYH…DLTI), 197–231 (PVVY…RASH), and 269–298 (EGRT…DIVV).

It belongs to the orthopoxviruses VACWR203 protein family.

This is Ankyrin repeat protein VACWR203 from Bos taurus (Bovine).